Here is an 85-residue protein sequence, read N- to C-terminus: Beta-insect depressant toxin BmKITa (85 aa).

An N-terminal signal peptide occupies residues 1–21 (MKLFLLLLISASMLIDGLVNA). An LCN-type CS-alpha/beta domain is found at 22–82 (DGYIRGSNGC…TWKSESNTCG (61 aa)). Cystine bridges form between Cys-31/Cys-81, Cys-35/Cys-56, Cys-42/Cys-63, and Cys-46/Cys-65. A Glycine amide modification is found at Gly-82.

In terms of tissue distribution, expressed by the venom gland.

The protein resides in the secreted. In terms of biological role, depressant insect beta-toxins cause a transient contraction paralysis followed by a slow flaccid paralysis. They bind voltage-independently at site-4 of sodium channels (Nav) and shift the voltage of activation toward more negative potentials thereby affecting sodium channel activation and promoting spontaneous and repetitive firing. This toxin also displays an evident analgesic effect but is devoid of any toxicity on mice. This chain is Beta-insect depressant toxin BmKITa, found in Olivierus martensii (Manchurian scorpion).